A 96-amino-acid chain; its full sequence is Small ribosomal subunit protein bS6 (96 aa).

It belongs to the bacterial ribosomal protein bS6 family.

In terms of biological role, binds together with bS18 to 16S ribosomal RNA. The polypeptide is Small ribosomal subunit protein bS6 (Bacillus cereus (strain ATCC 10987 / NRS 248)).